Reading from the N-terminus, the 136-residue chain is Large ribosomal subunit protein uL16 (136 aa).

This sequence belongs to the universal ribosomal protein uL16 family. In terms of assembly, part of the 50S ribosomal subunit.

Its function is as follows. Binds 23S rRNA and is also seen to make contacts with the A and possibly P site tRNAs. This chain is Large ribosomal subunit protein uL16, found in Pasteurella multocida (strain Pm70).